A 311-amino-acid chain; its full sequence is Porphobilinogen deaminase (311 aa).

Residue Cys242 is modified to S-(dipyrrolylmethanemethyl)cysteine.

The protein belongs to the HMBS family. In terms of assembly, monomer. The cofactor is dipyrromethane.

The catalysed reaction is 4 porphobilinogen + H2O = hydroxymethylbilane + 4 NH4(+). Its pathway is porphyrin-containing compound metabolism; protoporphyrin-IX biosynthesis; coproporphyrinogen-III from 5-aminolevulinate: step 2/4. Tetrapolymerization of the monopyrrole PBG into the hydroxymethylbilane pre-uroporphyrinogen in several discrete steps. The protein is Porphobilinogen deaminase of Hahella chejuensis (strain KCTC 2396).